Consider the following 203-residue polypeptide: LexA repressor (203 aa).

Residues 29–49 (VREIGQEVGLSSSSTVHGYLK) constitute a DNA-binding region (H-T-H motif). Residues Ser126 and Lys163 each act as for autocatalytic cleavage activity in the active site.

The protein belongs to the peptidase S24 family. As to quaternary structure, homodimer.

The catalysed reaction is Hydrolysis of Ala-|-Gly bond in repressor LexA.. Represses a number of genes involved in the response to DNA damage (SOS response), including recA and lexA. In the presence of single-stranded DNA, RecA interacts with LexA causing an autocatalytic cleavage which disrupts the DNA-binding part of LexA, leading to derepression of the SOS regulon and eventually DNA repair. The sequence is that of LexA repressor from Pelotomaculum thermopropionicum (strain DSM 13744 / JCM 10971 / SI).